The following is a 323-amino-acid chain: Cyclin-D5-1 (323 aa).

2 disordered regions span residues 17-36 and 281-323; these read ESSL…KQEP and HMTP…MRRL.

Belongs to the cyclin family. Cyclin D subfamily.

This chain is Cyclin-D5-1 (CYCD5-1), found in Arabidopsis thaliana (Mouse-ear cress).